The primary structure comprises 400 residues: Subtilisin-like protease CPC735_013700 (400 aa).

Residues 1 to 19 form the signal peptide; the sequence is MGFVKILSLSLAATAVADA. A propeptide spanning residues 20-116 is cleaved from the precursor; the sequence is ATILSPRYPN…IEPNQIVTIS (97 aa). Residues 36–115 enclose the Inhibitor I9 domain; that stretch reads YIVVMKDGVS…FIEPNQIVTI (80 aa). Residues 126–400 enclose the Peptidase S8 domain; it reads SWGLPRISVK…RKLLYNNSGK (275 aa). Active-site charge relay system residues include Asp161 and His192. Residue Asn252 is glycosylated (N-linked (GlcNAc...) asparagine). Ser346 functions as the Charge relay system in the catalytic mechanism. Asn396 carries an N-linked (GlcNAc...) asparagine glycan.

The protein belongs to the peptidase S8 family.

The protein resides in the secreted. Secreted subtilisin-like serine protease with keratinolytic activity that contributes to pathogenicity. In Coccidioides posadasii (strain C735) (Valley fever fungus), this protein is Subtilisin-like protease CPC735_013700.